Consider the following 66-residue polypeptide: uncharacterized protein (66 aa).

A signal peptide spans 1–19; sequence MRRLYRHLASFFLLPSCPG.

This is an uncharacterized protein from Saccharomyces cerevisiae (strain ATCC 204508 / S288c) (Baker's yeast).